A 796-amino-acid chain; its full sequence is Cation/H(+) antiporter 6B (796 aa).

13 helical membrane passes run 54 to 74, 93 to 113, 131 to 151, 159 to 179, 194 to 213, 223 to 243, 259 to 279, 285 to 305, 310 to 330, 344 to 364, 382 to 402, 411 to 431, and 444 to 464; these read DFWEYPLPQLEIIILSIFLLW, SMMLVGAVLSEMFGSMQIPCL, IGAFAFVLDWFLRGVTTDVGI, SVVIGITSMIIPWQIGKLLYS, YTVMTFTMSMTPFTCVNMLL, FGQIAQSAGMVTDLLAFFLTV, LAFMAFFIFVYLVRQFMLWVI, GAPVKNVYLYIGLLLAYLSYL, FLFFGPLGAFALGLAVPNGPP, EGIFLPLFGSLSMIKLDWSFL, FSFLPIVYIAKFATSFLAALA, IILGVIMGTKSSFELGYVLTA, and LLGVYILVNSLLTPMAIHFLY.

This sequence belongs to the monovalent cation:proton antiporter 2 (CPA2) transporter (TC 2.A.37) family. CHX (TC 2.A.37.4) subfamily. As to expression, preferentially expressed in pollen.

It is found in the membrane. Its function is as follows. May operate as a cation/H(+) antiporter. In Arabidopsis thaliana (Mouse-ear cress), this protein is Cation/H(+) antiporter 6B (CHX6b).